Here is a 317-residue protein sequence, read N- to C-terminus: Zinc transporter ZIP3 (317 aa).

The Extracellular segment spans residues 1–3 (MTK). The chain crosses the membrane as a helical span at residues 4-24 (LLVAKVLCMVGVFFFMLLGSL). Topologically, residues 25 to 42 (LPVKVIEADLEKAHRSKK) are cytoplasmic. Residues 43-63 (VLSLCNTFGGGVFLATCFNAL) form a helical membrane-spanning segment. Residues 64-85 (LPAVRDKLQQVLSLGHISTDYP) are Extracellular-facing. Residues 86–106 (LAETLMMVGFFLTVFVEQLVL) traverse the membrane as a helical segment. Over 107–172 (TFRRERPPFI…RELGRPGPLR (66 aa)) the chain is Cytoplasmic. Phosphoserine occurs at positions 125 and 129. The chain crosses the membrane as a helical span at residues 173–193 (LLSLVFALSAHSVFEGLALGL). At 194–199 (QEEGER) the chain is on the extracellular side. The chain crosses the membrane as a helical span at residues 200–220 (VVSLFVGVAIHETLVAVALGI). At 221–232 (SMARSAVPLRDA) the chain is on the cytoplasmic side. Residues 233–253 (AKLAVTVSAMIPVGIGLGLGI) traverse the membrane as a helical segment. Topologically, residues 254 to 265 (ESARSVASSVAS) are extracellular. A helical membrane pass occupies residues 266–286 (ALLQGLAGGTFLFVTFLEILA). Residues 287–294 (KELEERSE) are Cytoplasmic-facing. The chain crosses the membrane as a helical span at residues 295–315 (QLLKVLFLVLGYAVLAGMVFL). The Extracellular portion of the chain corresponds to 316–317 (KW).

Belongs to the ZIP transporter (TC 2.A.5) family. As to expression, highly expressed in the testes. Highly expressed in dentate gyrus granule cells of the hippocampus. Expressed in the mammary gland.

Its subcellular location is the cell membrane. It is found in the apical cell membrane. It carries out the reaction Zn(2+)(in) = Zn(2+)(out). Functionally, transporter for the divalent cation Zn(2+). Mediates the influx of Zn(2+) into cells from extracellular space. Controls Zn(2+) accumulation into dentate gyrus granule cells in the hippocampus. Mediates Zn(2+) reuptake from the secreted milk within the alveolar lumen. The sequence is that of Zinc transporter ZIP3 (Slc39a3) from Mus musculus (Mouse).